The chain runs to 225 residues: Translation initiation factor 6 (225 aa).

Belongs to the eIF-6 family.

Functionally, binds to the 50S ribosomal subunit and prevents its association with the 30S ribosomal subunit to form the 70S initiation complex. This chain is Translation initiation factor 6, found in Hyperthermus butylicus (strain DSM 5456 / JCM 9403 / PLM1-5).